A 426-amino-acid polypeptide reads, in one-letter code: MSAIVDIVAREILDSRGNPTVEVDVELASGAKGRAAVPSGASTGAHEAVELRDGDKSRFGGKGVLKAVEHVETEILEALQGAESMDQVAIDEAMIDLDGTPNKARLGANAILAVSLAVAKASAEELQIPLYRYVGGVYARTLPVPMMNIVNGGQHADNPIDIQEFMIQPVGAPTLADAVRVGSEIFAQLKKNLSAAGHNTNVGDEGGFAPGLKSADDALGFITKAVEAAGYRPGDDVTFALDCAATEFYRDGLYVMEGEGKTLDSAGMVAYLADLAARYPIVSIEDGLAEDDWEGWAVLTATLGKTVQLVGDDLFVTNPDRLRRGIKAGVANSLLVKVNQIGTLSETLEAVETAQRAGYTAVMSHRSGETEDSTIADLAVATNCGQIKTGSLSRSDRTAKYNQLIRIENELATAARYAGRTILKTA.

Gln163 serves as a coordination point for (2R)-2-phosphoglycerate. Residue Glu205 is the Proton donor of the active site. Asp242, Glu285, and Asp312 together coordinate Mg(2+). (2R)-2-phosphoglycerate-binding residues include Lys337, Arg366, Ser367, and Lys388. Lys337 (proton acceptor) is an active-site residue.

Belongs to the enolase family. It depends on Mg(2+) as a cofactor.

The protein localises to the cytoplasm. It is found in the secreted. Its subcellular location is the cell surface. The catalysed reaction is (2R)-2-phosphoglycerate = phosphoenolpyruvate + H2O. Its pathway is carbohydrate degradation; glycolysis; pyruvate from D-glyceraldehyde 3-phosphate: step 4/5. Catalyzes the reversible conversion of 2-phosphoglycerate (2-PG) into phosphoenolpyruvate (PEP). It is essential for the degradation of carbohydrates via glycolysis. This Gluconacetobacter diazotrophicus (strain ATCC 49037 / DSM 5601 / CCUG 37298 / CIP 103539 / LMG 7603 / PAl5) protein is Enolase.